A 469-amino-acid chain; its full sequence is MITTRFAPSPTGFLHVGGVRTALFSWLYARHNNGKFLLRIEDTDLERSTQAAVDAILDGMSWLGLKNDEEIYYQTKRFDRYHEVIKQLIAEGKAYYCNCSKERLDELREHQQANNLKTGYDGKCRDASYIPQEGDSFVVRFKNPQDGLVSWDDAVKGRISISNHELDDMIIQRTDGSPTYNFCVVVDDIDMAITHIIRGDDHVNNTPKQINIYKALNAHVPVFAHVPMILGPDGAKLSKRHGAVNVMQYREDGYLPQAILNYLVRLGWSHGDQEIFSIDEMIKSFNLEHINASPSRFDFDKLKWLNKHYIKESKFEDIRTEVEYHFAKFGLDIANGPDLQDLVAVMAEKVDTLVELTEKSSYFYSDDIVYDEKAVKKHVKTTTGEIFIKLLENFEALETQQWQDPDTLHNVVASTAEQCEVGMGKVGMPLRIAITGSGQSPDIGITLKLLGKEKVLSRLQRAIKELCNS.

The short motif at 8–18 (PSPTGFLHVGG) is the 'HIGH' region element. Cysteine 97, cysteine 99, cysteine 124, and aspartate 126 together coordinate Zn(2+). The 'KMSKS' region signature appears at 236–240 (KLSKR). Lysine 239 is a binding site for ATP.

The protein belongs to the class-I aminoacyl-tRNA synthetase family. Glutamate--tRNA ligase type 1 subfamily. Monomer. It depends on Zn(2+) as a cofactor.

The protein resides in the cytoplasm. The enzyme catalyses tRNA(Glu) + L-glutamate + ATP = L-glutamyl-tRNA(Glu) + AMP + diphosphate. Its function is as follows. Catalyzes the attachment of glutamate to tRNA(Glu) in a two-step reaction: glutamate is first activated by ATP to form Glu-AMP and then transferred to the acceptor end of tRNA(Glu). The sequence is that of Glutamate--tRNA ligase from Francisella philomiragia subsp. philomiragia (strain ATCC 25017 / CCUG 19701 / FSC 153 / O#319-036).